We begin with the raw amino-acid sequence, 129 residues long: Small ribosomal subunit protein uS9 (129 aa).

The protein belongs to the universal ribosomal protein uS9 family.

This is Small ribosomal subunit protein uS9 (rps9) from Thermoplasma acidophilum (strain ATCC 25905 / DSM 1728 / JCM 9062 / NBRC 15155 / AMRC-C165).